We begin with the raw amino-acid sequence, 230 residues long: Ribonuclease 3 (230 aa).

In terms of domain architecture, RNase III spans Met-1–Gly-134. Residue Glu-47 coordinates Mg(2+). The active site involves Asp-51. Mg(2+)-binding residues include Asp-120 and Glu-123. Glu-123 is a catalytic residue. A DRBM domain is found at Asp-160 to Glu-229.

The protein belongs to the ribonuclease III family. In terms of assembly, homodimer. The cofactor is Mg(2+).

It is found in the cytoplasm. It catalyses the reaction Endonucleolytic cleavage to 5'-phosphomonoester.. Functionally, digests double-stranded RNA. Involved in the processing of primary rRNA transcript to yield the immediate precursors to the large and small rRNAs (23S and 16S). Processes some mRNAs, and tRNAs when they are encoded in the rRNA operon. Processes pre-crRNA and tracrRNA of type II CRISPR loci if present in the organism. This Streptococcus pyogenes serotype M3 (strain SSI-1) protein is Ribonuclease 3.